The primary structure comprises 127 residues: Small ribosomal subunit protein uS11 (127 aa).

Belongs to the universal ribosomal protein uS11 family. In terms of assembly, part of the 30S ribosomal subunit. Interacts with proteins S7 and S18. Binds to IF-3.

In terms of biological role, located on the platform of the 30S subunit, it bridges several disparate RNA helices of the 16S rRNA. Forms part of the Shine-Dalgarno cleft in the 70S ribosome. The polypeptide is Small ribosomal subunit protein uS11 (Anaeromyxobacter dehalogenans (strain 2CP-C)).